A 483-amino-acid polypeptide reads, in one-letter code: Alginate biosynthesis protein AlgA (483 aa).

It belongs to the mannose-6-phosphate isomerase type 2 family. As to quaternary structure, monomer. Co(2+) is required as a cofactor.

It carries out the reaction D-mannose 6-phosphate = D-fructose 6-phosphate. It catalyses the reaction alpha-D-mannose 1-phosphate + GTP + H(+) = GDP-alpha-D-mannose + diphosphate. It participates in nucleotide-sugar biosynthesis; GDP-alpha-D-mannose biosynthesis; GDP-alpha-D-mannose from alpha-D-mannose 1-phosphate (GTP route): step 1/1. Its pathway is nucleotide-sugar biosynthesis; GDP-alpha-D-mannose biosynthesis; alpha-D-mannose 1-phosphate from D-fructose 6-phosphate: step 1/2. Functionally, produces a precursor for alginate polymerization. The alginate layer provides a protective barrier against host immune defenses and antibiotics. The polypeptide is Alginate biosynthesis protein AlgA (algA) (Pseudomonas syringae pv. tomato (strain ATCC BAA-871 / DC3000)).